Reading from the N-terminus, the 345-residue chain is Hydroxymethylglutaryl-CoA synthase (345 aa).

Asp-28 lines the (3S)-3-hydroxy-3-methylglutaryl-CoA pocket. Catalysis depends on Glu-80, which acts as the Proton donor/acceptor. Residues Cys-112 and Thr-153 each coordinate (3S)-3-hydroxy-3-methylglutaryl-CoA. Cys-112 functions as the Acyl-thioester intermediate in the catalytic mechanism. Arg-199 lines the CoA pocket. Residues Thr-201 and His-234 each contribute to the (3S)-3-hydroxy-3-methylglutaryl-CoA site. The Proton donor/acceptor role is filled by His-234. Lys-239 provides a ligand contact to CoA. Arg-243, Asn-266, and Ser-296 together coordinate (3S)-3-hydroxy-3-methylglutaryl-CoA.

It belongs to the thiolase-like superfamily. Archaeal HMG-CoA synthase family. In terms of assembly, interacts with acetoacetyl-CoA thiolase that catalyzes the precedent step in the pathway and with a DUF35 protein. The acetoacetyl-CoA thiolase/HMG-CoA synthase complex channels the intermediate via a fused CoA-binding site, which allows for efficient coupling of the endergonic thiolase reaction with the exergonic HMGCS reaction.

It catalyses the reaction acetoacetyl-CoA + acetyl-CoA + H2O = (3S)-3-hydroxy-3-methylglutaryl-CoA + CoA + H(+). The protein operates within metabolic intermediate biosynthesis; (R)-mevalonate biosynthesis; (R)-mevalonate from acetyl-CoA: step 2/3. In terms of biological role, catalyzes the condensation of acetyl-CoA with acetoacetyl-CoA to form 3-hydroxy-3-methylglutaryl-CoA (HMG-CoA). Functions in the mevalonate (MVA) pathway leading to isopentenyl diphosphate (IPP), a key precursor for the biosynthesis of isoprenoid compounds that are building blocks of archaeal membrane lipids. This Methanocaldococcus jannaschii (strain ATCC 43067 / DSM 2661 / JAL-1 / JCM 10045 / NBRC 100440) (Methanococcus jannaschii) protein is Hydroxymethylglutaryl-CoA synthase.